Here is a 326-residue protein sequence, read N- to C-terminus: Biotin synthase (326 aa).

The region spanning 51–275 is the Radical SAM core domain; the sequence is NAVQRSTLLS…MMPTSFVRLS (225 aa). 3 residues coordinate [4Fe-4S] cluster: Cys66, Cys70, and Cys73. [2Fe-2S] cluster contacts are provided by Cys110, Cys141, Cys201, and Arg273.

It belongs to the radical SAM superfamily. Biotin synthase family. In terms of assembly, homodimer. Requires [4Fe-4S] cluster as cofactor. [2Fe-2S] cluster serves as cofactor.

The catalysed reaction is (4R,5S)-dethiobiotin + (sulfur carrier)-SH + 2 reduced [2Fe-2S]-[ferredoxin] + 2 S-adenosyl-L-methionine = (sulfur carrier)-H + biotin + 2 5'-deoxyadenosine + 2 L-methionine + 2 oxidized [2Fe-2S]-[ferredoxin]. The protein operates within cofactor biosynthesis; biotin biosynthesis; biotin from 7,8-diaminononanoate: step 2/2. Catalyzes the conversion of dethiobiotin (DTB) to biotin by the insertion of a sulfur atom into dethiobiotin via a radical-based mechanism. This is Biotin synthase from Aromatoleum aromaticum (strain DSM 19018 / LMG 30748 / EbN1) (Azoarcus sp. (strain EbN1)).